The primary structure comprises 361 residues: Geranylgeranyl pyrophosphate synthase 3 (361 aa).

A disordered region spans residues 44–63 (DSNGSKELAPNGAQSRVQKP). Isopentenyl diphosphate is bound by residues lysine 81, arginine 84, and histidine 113. Mg(2+) contacts are provided by aspartate 120 and aspartate 124. A dimethylallyl diphosphate-binding site is contributed by arginine 129. Arginine 130 contacts isopentenyl diphosphate. Dimethylallyl diphosphate contacts are provided by lysine 207, threonine 208, and glutamine 244. Aspartate 247 lines the Mg(2+) pocket. Dimethylallyl diphosphate contacts are provided by asparagine 251, lysine 261, and lysine 271.

It belongs to the FPP/GGPP synthase family. Mg(2+) is required as a cofactor.

It catalyses the reaction isopentenyl diphosphate + dimethylallyl diphosphate = (2E)-geranyl diphosphate + diphosphate. The enzyme catalyses isopentenyl diphosphate + (2E)-geranyl diphosphate = (2E,6E)-farnesyl diphosphate + diphosphate. The catalysed reaction is isopentenyl diphosphate + (2E,6E)-farnesyl diphosphate = (2E,6E,10E)-geranylgeranyl diphosphate + diphosphate. Functionally, geranylgeranyl pyrophosphate synthase; part of the gene cluster 25 that mediates the biosynthesis of an isoprenoid secondary metabolite. This is Geranylgeranyl pyrophosphate synthase 3 (GGS3) from Zymoseptoria tritici (strain CBS 115943 / IPO323) (Speckled leaf blotch fungus).